Here is a 100-residue protein sequence, read N- to C-terminus: Urease subunit gamma (100 aa).

It belongs to the urease gamma subunit family. Heterotrimer of UreA (gamma), UreB (beta) and UreC (alpha) subunits. Three heterotrimers associate to form the active enzyme.

Its subcellular location is the cytoplasm. The enzyme catalyses urea + 2 H2O + H(+) = hydrogencarbonate + 2 NH4(+). Its pathway is nitrogen metabolism; urea degradation; CO(2) and NH(3) from urea (urease route): step 1/1. The chain is Urease subunit gamma from Blochmanniella pennsylvanica (strain BPEN).